A 1049-amino-acid polypeptide reads, in one-letter code: Tegument protein pp150 (1049 aa).

Disordered regions lie at residues 397–549 and 659–945; these read EERQ…DPRF and PFRM…YPAV. The span at 428-439 shows a compositional bias: acidic residues; it reads ADEDDDDDDDDE. Over residues 452–462 the composition is skewed to gly residues; sequence SGKGAASGGGV. The segment covering 463–474 has biased composition (low complexity); that stretch reads SSIFSGLLSSGS. The span at 475–490 shows a compositional bias: polar residues; it reads QKPTSGPLNIPQQQQR. The segment covering 509-525 has biased composition (basic and acidic residues); it reads VRRDSAWDVRPLTETRG. Over residues 672-688 the composition is skewed to low complexity; it reads TVSTTPRRPSTPRAAVT. The segment covering 710–722 has biased composition (acidic residues); the sequence is PVEDSEEEDDDSS. A compositionally biased stretch (polar residues) spans 731-743; sequence GHTTPSSDYNNDV. Positions 745-757 are enriched in low complexity; it reads SPPSQTPEQSTPS. Composition is skewed to polar residues over residues 766–776, 791–800, and 808–835; these read SPMTTTSTSQK, RAQTVTSTPV, and VSGT…SRNV. 4 stretches are compositionally biased toward low complexity: residues 836–855, 866–884, 912–928, and 936–945; these read TSGA…ASAS, SPAT…SPAK, VVGR…APGR, and ASTTPTYPAV. The O-linked (GlcNAc) serine; by host glycan is linked to Ser-922. An O-linked (GlcNAc) serine; by host glycan is attached at Ser-953. The disordered stretch occupies residues 1006–1032; the sequence is DLSSPQKSGTGPQPGSAGMGGAKTPSD. Residues 1008–1018 show a composition bias toward polar residues; sequence SSPQKSGTGPQ.

The protein belongs to the herpesviridae large structural phosphoprotein family. In terms of assembly, interacts with host BICD1 and RAB6A. Interacts with small capsid protein UL48A; this interaction links together the capsid and pp150. Interacts with host CCNA2. Post-translationally, phosphorylated by host CCNA2.

Its subcellular location is the virion tegument. The protein localises to the host cytoplasm. The protein resides in the host nucleus. Participates in the last steps of viral maturation and release. Associates with nuclear capsids prior to DNA encapsidation and later preserves the integrity of nucleocapsids through secondary envelopment at the assembly compartment. Interacts with host CCNA2 and thereby blocks the onset of lytic gene expression to promote establishment of a quiescent state of infection in undifferentiated cells. This is Tegument protein pp150 (UL32) from Homo sapiens (Human).